The following is a 682-amino-acid chain: Potassium-transporting ATPase ATP-binding subunit (682 aa).

Transmembrane regions (helical) follow at residues 34–54 (PVMF…IAMA), 62–82 (ALFS…ANFA), 219–239 (IALT…TATL), and 254–274 (VLVA…LSAI). The active-site 4-aspartylphosphate intermediate is the Asp-307. ATP contacts are provided by residues Asp-344, Glu-348, 377–384 (FTAQSRMS), and Lys-395. Positions 518 and 522 each coordinate Mg(2+). The next 3 helical transmembrane spans lie at 588-608 (FAII…LNIM), 616-636 (AILS…PLAL), and 656-676 (IYGL…DLLL).

This sequence belongs to the cation transport ATPase (P-type) (TC 3.A.3) family. Type IA subfamily. In terms of assembly, the system is composed of three essential subunits: KdpA, KdpB and KdpC.

The protein localises to the cell inner membrane. It carries out the reaction K(+)(out) + ATP + H2O = K(+)(in) + ADP + phosphate + H(+). Part of the high-affinity ATP-driven potassium transport (or Kdp) system, which catalyzes the hydrolysis of ATP coupled with the electrogenic transport of potassium into the cytoplasm. This subunit is responsible for energy coupling to the transport system and for the release of the potassium ions to the cytoplasm. The sequence is that of Potassium-transporting ATPase ATP-binding subunit from Escherichia coli (strain ATCC 8739 / DSM 1576 / NBRC 3972 / NCIMB 8545 / WDCM 00012 / Crooks).